Reading from the N-terminus, the 854-residue chain is DNA mismatch repair protein MutS (854 aa).

614 to 621 lines the ATP pocket; the sequence is GPNMGGKS.

This sequence belongs to the DNA mismatch repair MutS family.

Functionally, this protein is involved in the repair of mismatches in DNA. It is possible that it carries out the mismatch recognition step. This protein has a weak ATPase activity. This Sodalis glossinidius (strain morsitans) protein is DNA mismatch repair protein MutS.